Here is a 314-residue protein sequence, read N- to C-terminus: Hydroxyacyl-coenzyme A dehydrogenase, mitochondrial (314 aa).

A mitochondrion-targeting transit peptide spans 1 to 12 (MAFVTRQFMRSV). Residues 34–39 (GGGLMG) and Asp57 each bind NAD(+). Ser73 and Lys80 together coordinate CoA. At Lys80 the chain carries N6-succinyllysine. Lys81 and Lys87 each carry N6-acetyllysine; alternate. N6-succinyllysine; alternate occurs at positions 81 and 87. Glu122 serves as a coordination point for NAD(+). Lys125 bears the N6-acetyllysine mark. Lys127 serves as a coordination point for NAD(+). Position 127 is an N6-(2-hydroxyisobutyryl)lysine (Lys127). An N6-acetyllysine; alternate modification is found at Lys136. Lys136 is modified (N6-succinyllysine; alternate). Residues Ser149 and Asn173 each contribute to the NAD(+) site. A CoA-binding site is contributed by Ser149. Lys179 is subject to N6-acetyllysine. Residues Lys185, Lys192, and Lys202 each carry the N6-acetyllysine; alternate modification. Lys185, Lys192, and Lys202 each carry N6-succinyllysine; alternate. N6-succinyllysine is present on Lys206. Lys212 and Lys241 each carry N6-acetyllysine; alternate. 2 positions are modified to N6-succinyllysine; alternate: Lys212 and Lys241. Lys305 is an NAD(+) binding site. Lys312 is subject to N6-acetyllysine; alternate. N6-succinyllysine; alternate is present on Lys312.

It belongs to the 3-hydroxyacyl-CoA dehydrogenase family. In terms of assembly, homodimer. Interacts with GLUD1; this interaction inhibits the activation of glutamate dehydrogenase 1 (GLUD1). Succinylation at Lys-81, adjacent to a coenzyme A binding site. Desuccinylated by SIRT5. In terms of tissue distribution, expressed in liver, kidney, pancreas, heart and skeletal muscle.

Its subcellular location is the mitochondrion matrix. The enzyme catalyses a (3S)-3-hydroxyacyl-CoA + NAD(+) = a 3-oxoacyl-CoA + NADH + H(+). It catalyses the reaction (3S)-3-hydroxybutanoyl-CoA + NAD(+) = acetoacetyl-CoA + NADH + H(+). The catalysed reaction is (3S)-hydroxydecanoyl-CoA + NAD(+) = 3-oxodecanoyl-CoA + NADH + H(+). It carries out the reaction (3S)-hydroxyhexadecanoyl-CoA + NAD(+) = 3-oxohexadecanoyl-CoA + NADH + H(+). Its pathway is lipid metabolism; fatty acid beta-oxidation. Its function is as follows. Mitochondrial fatty acid beta-oxidation enzyme that catalyzes the third step of the beta-oxidation cycle for medium and short-chain 3-hydroxy fatty acyl-CoAs (C4 to C10). Plays a role in the control of insulin secretion by inhibiting the activation of glutamate dehydrogenase 1 (GLUD1), an enzyme that has an important role in regulating amino acid-induced insulin secretion. Plays a role in the maintenance of normal spermatogenesis through the reduction of fatty acid accumulation in the testes. The chain is Hydroxyacyl-coenzyme A dehydrogenase, mitochondrial (HADH) from Homo sapiens (Human).